We begin with the raw amino-acid sequence, 423 residues long: Glutamyl-tRNA reductase 2 (423 aa).

Residues 48–51 (TCYR), S103, 108–110 (EPQ), and Q114 contribute to the substrate site. C49 acts as the Nucleophile in catalysis. NADP(+) is bound at residue 183–188 (GAGEMA).

It belongs to the glutamyl-tRNA reductase family. Homodimer.

The catalysed reaction is (S)-4-amino-5-oxopentanoate + tRNA(Glu) + NADP(+) = L-glutamyl-tRNA(Glu) + NADPH + H(+). It participates in porphyrin-containing compound metabolism; protoporphyrin-IX biosynthesis; 5-aminolevulinate from L-glutamyl-tRNA(Glu): step 1/2. Functionally, catalyzes the NADPH-dependent reduction of glutamyl-tRNA(Glu) to glutamate 1-semialdehyde (GSA). In Anaeromyxobacter sp. (strain Fw109-5), this protein is Glutamyl-tRNA reductase 2.